Consider the following 949-residue polypeptide: Insulin receptor substrate 1 (949 aa).

The region spanning 8 to 109 is the PH domain; it reads GMALSGYLKK…WLDKLLVLQR (102 aa). The 115-residue stretch at 122 to 236 folds into the IRS-type PTB domain; sequence YDQVWQVVIQ…SAMSAKTESN (115 aa). The disordered stretch occupies residues 247-270; the sequence is PDLSHEPMRKRSSSANEASKPINV. Ser286, Ser287, and Ser342 each carry phosphoserine. Polar residues predominate over residues 304 to 345; that stretch reads RNGTLSESSNQTYFGSNHGLRSNTISGNRPHSTNKHSNSPTF. Positions 304-373 are disordered; the sequence is RNGTLSESSN…SDDNGSYSHY (70 aa). Tyr410 carries the post-translational modification Phosphotyrosine; by INSR. The YXXM motif 1 signature appears at 410 to 413; sequence YIPM. The interval 530 to 556 is disordered; that stretch reads RSQSSITKEGSGYGTSGNRQKKSTSAP. At Ser554 the chain carries Phosphoserine. The short motif at 640 to 643 is the YXXM motif 2 element; sequence YLEM. Positions 696–706 are enriched in basic and acidic residues; that stretch reads REQTTSEEKKS. The segment at 696-718 is disordered; the sequence is REQTTSEEKKSNSPLNEKPFSLK. Phosphotyrosine; by INSR is present on Tyr892. The interval 906 to 949 is disordered; the sequence is AKYLKRGSRESPPVSACPEDGNTYAKIDFDQSDSSSSSSNIFNT. 2 positions are modified to phosphoserine: Ser913 and Ser916. Tyr929 is modified (phosphotyrosine; by INSR). The span at 937-949 shows a compositional bias: low complexity; the sequence is SDSSSSSSNIFNT.

Bindings to phosphatidylinositol 3-kinase and SHP2.

Activates phosphatidylinositol 3-kinase when bound to the regulatory p85 subunit. May mediate the control of various cellular processes by insulin-like peptides. When phosphorylated by the insulin receptor binds specifically to various cellular proteins containing SH2 domains. Involved in control of cell proliferation, cell size, and body and organ growth throughout development. Also has a role in a signaling pathway controlling the physiological response required to endure periods of low nutrient conditions. Insulin/insulin-like growth factor (IGF) signaling pathway has a role in regulating aging and is necessary in the ovary for vitellogenic maturation. In Drosophila yakuba (Fruit fly), this protein is Insulin receptor substrate 1.